The sequence spans 282 residues: Autophagy protein 5 (282 aa).

A Glycyl lysine isopeptide (Lys-Gly) (interchain with G-Cter in ATG12) cross-link involves residue Lys-144.

This sequence belongs to the ATG5 family. Conjugated with ATG12. In terms of processing, conjugated to ATG12; which is essential for autophagy.

Its subcellular location is the preautophagosomal structure membrane. Functionally, involved in cytoplasm to vacuole transport (Cvt) and autophagic vesicle formation. Autophagy is essential for maintenance of amino acid levels and protein synthesis under nitrogen starvation. Required for selective autophagic degradation of the nucleus (nucleophagy). Also required for mitophagy, which eliminates defective or superfluous mitochondria in order to fulfill cellular energy requirements and prevent excess ROS production. Conjugation with ATG12, through a ubiquitin-like conjugating system involving ATG7 as an E1-like activating enzyme and ATG10 as an E2-like conjugating enzyme, is essential for its function. The ATG12-ATG5 conjugate acts as an E3-like enzyme which is required for lipidation of ATG8 and ATG8 association to the vesicle membranes. In Scheffersomyces stipitis (strain ATCC 58785 / CBS 6054 / NBRC 10063 / NRRL Y-11545) (Yeast), this protein is Autophagy protein 5 (ATG5).